We begin with the raw amino-acid sequence, 261 residues long: Triosephosphate isomerase (261 aa).

10–12 provides a ligand contact to substrate; that stretch reads NWK. The active-site Electrophile is His-100. The active-site Proton acceptor is the Glu-172. Substrate is bound by residues Gly-178, Ser-218, and 239–240; that span reads GG.

Belongs to the triosephosphate isomerase family. In terms of assembly, homodimer.

The protein resides in the cytoplasm. It carries out the reaction D-glyceraldehyde 3-phosphate = dihydroxyacetone phosphate. The protein operates within carbohydrate biosynthesis; gluconeogenesis. It participates in carbohydrate degradation; glycolysis; D-glyceraldehyde 3-phosphate from glycerone phosphate: step 1/1. Involved in the gluconeogenesis. Catalyzes stereospecifically the conversion of dihydroxyacetone phosphate (DHAP) to D-glyceraldehyde-3-phosphate (G3P). The sequence is that of Triosephosphate isomerase from Mycobacterium avium (strain 104).